The following is a 406-amino-acid chain: UPF0754 membrane protein CYB_2931 (406 aa).

2 consecutive transmembrane segments (helical) span residues 1–21 (MAFW…YFTN) and 385–405 (IVNL…LFLL).

It belongs to the UPF0754 family.

Its subcellular location is the cell inner membrane. The chain is UPF0754 membrane protein CYB_2931 from Synechococcus sp. (strain JA-2-3B'a(2-13)) (Cyanobacteria bacterium Yellowstone B-Prime).